The primary structure comprises 760 residues: MFQYEALHVGCNRIPTAATWSSNLGLIYGAERLIAVADPFKEINYLMAGHSGRINCVCELATNSEYRSPFILSGASDKTLRLWQLEEEYFTCIKTIELEATVNCLCVNENLVVCGCSNSSCIVYSWNAEQRNLTEISRFTCSEIIPLEFAIVKLDHGIILTVCGSSKKIMVYGSDSAISSFKLKAVLRGHLDWVRTLSFKKTSGSTATLASGSQDRYIRLWNISLWGSEDEKVSEEFFESVLSNKPVRFTLGKIDLKIVFDALLMGHEDWVMSVDWHPTKEMILSSSADSSMIVWEPDTNTGIWVVTGRMGEMASSHGSTTATGSAGGFWGGLWNPNGNCVVCWGRTGGWRLWKQDAGQWLQLPSISGHTKSVKGVAWDPEGKFYLSAGTDQTTRLFARFKKDNAWHEMARPQIHGYDLTSISCMPSRIGFLSCADEKVSRVFKFPKTIVRLLYRLCDTNIGEESLPDAANVPLLGLSNKATTASETGTVNAEEVQTPVADVIGSLNHPPFEEHLQRLLLFPEVEKLFGHGYEVYACAISNNGNIAATSCKSQTPEHAVIRLYETQSWNQQQVLKGHSLTVTTIKFSPDDRYILSAGRDRLVCLHEQAENLLDYNNFASIKAHSRIIWDASWAPKEMGYFFATASRDKFVKFWKINDNKKICDVAALQFSDAVTAVDFAPFFHNDELLLAVGTEAGKIFIWRCPRENLTKWYPTRLPDHMAPMESINQILWKPTFETMGLYSLLIAGEDTSVRLLNVTLG.

12 WD repeats span residues 49-93, 97-134, 139-182, 189-231, 266-305, 324-363, 368-407, 414-453, 576-615, 622-663, 668-711, and 721-760; these read GHSG…FTCI, ELEATVNCLCVNENLVVCGCSNSSCIVYSWNAEQRNLT, FTCS…SSFK, GHLD…SEDE, GHEDWVMSVDWHPTKEMILSSSADSSMIVWEPDTNTGIWV, GSAGGFWGGLWNPNGNCVVCWGRTGGWRLWKQDAGQWLQL, GHTKSVKGVAWDPEGKFYLSAGTDQTTRLFARFKKDNAWH, IHGYDLTSISCMPSRIGFLSCADEKVSRVFKFPKTIVRLL, GHSLTVTTIKFSPDDRYILSAGRDRLVCLHEQAENLLDYN, AHSR…KICD, QFSD…LTKW, and APMESINQILWKPTFETMGLYSLLIAGEDTSVRLLNVTLG.

It belongs to the WD repeat ELP2 family. As to quaternary structure, component of the elongator complex.

The protein resides in the cytoplasm. It localises to the nucleus. The protein operates within tRNA modification; 5-methoxycarbonylmethyl-2-thiouridine-tRNA biosynthesis. In terms of biological role, component of the elongator complex which is required for multiple tRNA modifications, including mcm5U (5-methoxycarbonylmethyl uridine), mcm5s2U (5-methoxycarbonylmethyl-2-thiouridine), and ncm5U (5-carbamoylmethyl uridine). The elongator complex catalyzes formation of carboxymethyluridine in the wobble base at position 34 in tRNAs. This chain is Elongator complex protein 2 (elp2), found in Schizosaccharomyces pombe (strain 972 / ATCC 24843) (Fission yeast).